Reading from the N-terminus, the 391-residue chain is uncharacterized protein (391 aa).

The next 11 membrane-spanning stretches (helical) occupy residues 15–35 (LSFC…LPIL), 48–68 (FLIG…QIPF), 81–101 (IIFG…TNSI), 139–159 (IIGV…PIIA), 167–187 (IFWI…FLIP), 217–237 (FYLG…IIPY), 251–271 (IVYF…VFYF), 275–295 (FFLK…LLLF), 303–323 (ICLT…EIFF), 346–366 (TSQF…CTFF), and 369–389 (NHIF…SFFC).

It belongs to the major facilitator superfamily.

It localises to the cell membrane. This is an uncharacterized protein from Buchnera aphidicola subsp. Schizaphis graminum (strain Sg).